The sequence spans 215 residues: UPF0502 protein PSEEN2299 (215 aa).

The protein belongs to the UPF0502 family.

This chain is UPF0502 protein PSEEN2299, found in Pseudomonas entomophila (strain L48).